The primary structure comprises 251 residues: Sugar fermentation stimulation protein homolog (251 aa).

The protein belongs to the SfsA family.

This chain is Sugar fermentation stimulation protein homolog, found in Prochlorococcus marinus (strain MIT 9313).